A 162-amino-acid polypeptide reads, in one-letter code: Cyclic pyranopterin monophosphate synthase (162 aa).

Residues leucine 75–histidine 77 and methionine 113–glutamate 114 contribute to the substrate site. The active site involves aspartate 128.

This sequence belongs to the MoaC family. In terms of assembly, homohexamer; trimer of dimers.

The catalysed reaction is (8S)-3',8-cyclo-7,8-dihydroguanosine 5'-triphosphate = cyclic pyranopterin phosphate + diphosphate. It functions in the pathway cofactor biosynthesis; molybdopterin biosynthesis. Functionally, catalyzes the conversion of (8S)-3',8-cyclo-7,8-dihydroguanosine 5'-triphosphate to cyclic pyranopterin monophosphate (cPMP). In Burkholderia cenocepacia (strain ATCC BAA-245 / DSM 16553 / LMG 16656 / NCTC 13227 / J2315 / CF5610) (Burkholderia cepacia (strain J2315)), this protein is Cyclic pyranopterin monophosphate synthase.